A 315-amino-acid polypeptide reads, in one-letter code: Putative HTH-type transcriptional regulatory protein PH1808 (315 aa).

In terms of domain architecture, HTH cro/C1-type spans 131 to 189 (LKALREEHGYSITELAGILGISRKSLQRYEKGESVVSLEVALRLEEVFDEPLVKPIDVL). The segment at residues 142-161 (ITELAGILGISRKSLQRYEK) is a DNA-binding region (H-T-H motif).

The chain is Putative HTH-type transcriptional regulatory protein PH1808 from Pyrococcus horikoshii (strain ATCC 700860 / DSM 12428 / JCM 9974 / NBRC 100139 / OT-3).